Consider the following 294-residue polypeptide: Ribosomal RNA small subunit methyltransferase H (294 aa).

S-adenosyl-L-methionine contacts are provided by residues 37-39, Asp-58, Leu-93, Asp-105, and Gln-112; that span reads GGH.

Belongs to the methyltransferase superfamily. RsmH family.

It is found in the cytoplasm. The catalysed reaction is cytidine(1402) in 16S rRNA + S-adenosyl-L-methionine = N(4)-methylcytidine(1402) in 16S rRNA + S-adenosyl-L-homocysteine + H(+). Functionally, specifically methylates the N4 position of cytidine in position 1402 (C1402) of 16S rRNA. The protein is Ribosomal RNA small subunit methyltransferase H of Fervidobacterium nodosum (strain ATCC 35602 / DSM 5306 / Rt17-B1).